The following is a 474-amino-acid chain: Synaptotagmin-15B (474 aa).

2 disordered regions span residues 1-62 and 75-128; these read MGVV…AASG and PRAA…PPAV. The segment covering 75–88 has biased composition (low complexity); sequence PRAAAGHQQHHGPP. C2 domains are found at residues 200–317 and 331–452; these read CLGR…RRVI and EFGD…EHWD.

The protein belongs to the synaptotagmin family.

This is Synaptotagmin-15B from Homo sapiens (Human).